Here is an 86-residue protein sequence, read N- to C-terminus: Small ribosomal subunit protein bS20 (86 aa).

The protein belongs to the bacterial ribosomal protein bS20 family.

Functionally, binds directly to 16S ribosomal RNA. The protein is Small ribosomal subunit protein bS20 of Rhodococcus opacus (strain B4).